We begin with the raw amino-acid sequence, 212 residues long: Pyridoxine/pyridoxamine 5'-phosphate oxidase (212 aa).

Residues arginine 7–tyrosine 10 and lysine 65 each bind substrate. Residues arginine 60 to lysine 65, phenylalanine 75 to threonine 76, lysine 82, and glutamine 104 contribute to the FMN site. Substrate-binding residues include tyrosine 122, arginine 126, and serine 130. FMN contacts are provided by residues glutamine 139–serine 140 and tryptophan 184. Position 190 to 192 (arginine 190 to histidine 192) interacts with substrate. Residue arginine 194 coordinates FMN.

The protein belongs to the pyridoxamine 5'-phosphate oxidase family. Homodimer. The cofactor is FMN.

It carries out the reaction pyridoxamine 5'-phosphate + O2 + H2O = pyridoxal 5'-phosphate + H2O2 + NH4(+). The enzyme catalyses pyridoxine 5'-phosphate + O2 = pyridoxal 5'-phosphate + H2O2. Its pathway is cofactor metabolism; pyridoxal 5'-phosphate salvage; pyridoxal 5'-phosphate from pyridoxamine 5'-phosphate: step 1/1. The protein operates within cofactor metabolism; pyridoxal 5'-phosphate salvage; pyridoxal 5'-phosphate from pyridoxine 5'-phosphate: step 1/1. Its function is as follows. Catalyzes the oxidation of either pyridoxine 5'-phosphate (PNP) or pyridoxamine 5'-phosphate (PMP) into pyridoxal 5'-phosphate (PLP). This Rippkaea orientalis (strain PCC 8801 / RF-1) (Cyanothece sp. (strain PCC 8801)) protein is Pyridoxine/pyridoxamine 5'-phosphate oxidase.